The primary structure comprises 324 residues: Glyoxylate/hydroxypyruvate reductase B (324 aa).

Catalysis depends on residues R237 and E266. H285 serves as the catalytic Proton donor.

It belongs to the D-isomer specific 2-hydroxyacid dehydrogenase family. GhrB subfamily. As to quaternary structure, homodimer.

The protein localises to the cytoplasm. The catalysed reaction is glycolate + NADP(+) = glyoxylate + NADPH + H(+). It carries out the reaction (R)-glycerate + NAD(+) = 3-hydroxypyruvate + NADH + H(+). The enzyme catalyses (R)-glycerate + NADP(+) = 3-hydroxypyruvate + NADPH + H(+). In terms of biological role, catalyzes the NADPH-dependent reduction of glyoxylate and hydroxypyruvate into glycolate and glycerate, respectively. The chain is Glyoxylate/hydroxypyruvate reductase B from Shigella sonnei (strain Ss046).